We begin with the raw amino-acid sequence, 153 residues long: MTHDNKLQVEAIRRGTVIDHIPAQVGFKLLSLFKLTETDQRITIGLNLPSGEMGRKDLIKIENTFLTDEQVNQLALYAPQATVNRIDDYEVVGKSKPSLPDRIENVLVCPNGNCISRIEPVSSSFAVKTRGDAVQLKCKYCEKEFARHVVLAD.

Zn(2+) contacts are provided by Cys-109, Cys-114, Cys-138, and Cys-141.

The protein belongs to the PyrI family. As to quaternary structure, contains catalytic and regulatory chains. Zn(2+) serves as cofactor.

Involved in allosteric regulation of aspartate carbamoyltransferase. The chain is Aspartate carbamoyltransferase regulatory chain from Cronobacter sakazakii (strain ATCC BAA-894) (Enterobacter sakazakii).